An 85-amino-acid chain; its full sequence is Putative RING finger protein 095L (85 aa).

Residues 39 to 73 form an RING-type; degenerate zinc finger; it reads CPIWYNYQVNTVFLPCAHVACYLCSKIIKNCHLCR.

This Invertebrate iridescent virus 6 (IIV-6) protein is Putative RING finger protein 095L.